Reading from the N-terminus, the 382-residue chain is tRNA-queuosine alpha-mannosyltransferase (382 aa).

It belongs to the glycosyltransferase group 1 family. Glycosyltransferase 4 subfamily.

The protein localises to the cytoplasm. It is found in the nucleus. The catalysed reaction is queuosine(34) in tRNA(Asp) + GDP-alpha-D-mannose = O-4''-alpha-D-mannosylqueuosine(34) in tRNA(Asp) + GDP + H(+). Its function is as follows. Glycosyltransferase that specifically catalyzes mannosylation of cytoplasmic tRNA(Asp) modified with queuosine at position 34 (queuosine(34)). Mannosylates the cyclopentene moiety of queuosine(34) in tRNA(Asp) to form mannosyl-queuosine(34). Mannosylation of queuosine(34) in tRNA(Asp) is required to slow-down elongation at cognate codons, GAC and GAU, thereby regulating protein translation. In Gallus gallus (Chicken), this protein is tRNA-queuosine alpha-mannosyltransferase (GTDC1).